The chain runs to 141 residues: Hemoglobin subunit alpha-A (141 aa).

The Globin domain occupies 1–141 (VLSANDKTNV…VGNVLSAKYR (141 aa)). H58 is an O2 binding site. H87 contributes to the heme b binding site.

The protein belongs to the globin family. In terms of assembly, heterotetramer of two alpha chains and two beta chains. In terms of tissue distribution, red blood cells.

Its function is as follows. Involved in oxygen transport from the lung to the various peripheral tissues. This Trigonoceps occipitalis (White-headed vulture) protein is Hemoglobin subunit alpha-A (HBAA).